A 315-amino-acid polypeptide reads, in one-letter code: Homoserine kinase (315 aa).

97-107 (PPARGLGSSAT) serves as a coordination point for ATP.

It belongs to the GHMP kinase family. Homoserine kinase subfamily.

It is found in the cytoplasm. It carries out the reaction L-homoserine + ATP = O-phospho-L-homoserine + ADP + H(+). Its pathway is amino-acid biosynthesis; L-threonine biosynthesis; L-threonine from L-aspartate: step 4/5. Functionally, catalyzes the ATP-dependent phosphorylation of L-homoserine to L-homoserine phosphate. This chain is Homoserine kinase, found in Prochlorococcus marinus (strain NATL1A).